Here is a 289-residue protein sequence, read N- to C-terminus: Metal-staphylopine import system permease protein CntC (289 aa).

5 consecutive transmembrane segments (helical) span residues 13-33, 77-97, 115-135, 194-214, and 249-269; these read AVIALGIIVLYVFLGLAAPLV, LLYVFVALFVSVLIGSILGFL, VMLAFPSYVVTLALIALFGMG, IAIISSSSMCSMILQISGFSF, and IAIVIIVMAFNFLSDALQIAI. The 190-residue stretch at 73 to 262 folds into the ABC transmembrane type-1 domain; the sequence is IRPSLLYVFV…IIVMAFNFLS (190 aa).

Belongs to the binding-protein-dependent transport system permease family. The complex is composed of two ATP-binding proteins (CntD and CntF), two transmembrane proteins (CntB and CntC) and a solute-binding protein (CntA).

It localises to the cell membrane. Nickel/cobalt import is reduced in the presence of zinc. Part of the ABC transporter complex CntABCDF (Opp1) involved in the uptake of metal in complex with the metallophore staphylopine (StP). Involved in the import of divalent metals ions such as nickel, cobalt and zinc. Probably responsible for the translocation of the substrate across the membrane. Plays a major role in nickel/cobalt import in zinc-depleted conditions. Contributes to virulence. Required for full urease activity in vitro. This chain is Metal-staphylopine import system permease protein CntC, found in Staphylococcus aureus (strain NCTC 8325 / PS 47).